We begin with the raw amino-acid sequence, 602 residues long: Adenylosuccinate synthetase (602 aa).

GTP contacts are provided by residues glycine 74–lysine 80 and glycine 104–threonine 106. Aspartate 75 functions as the Proton acceptor in the catalytic mechanism. Aspartate 75 and glycine 104 together coordinate Mg(2+). IMP contacts are provided by residues aspartate 75 to lysine 78, asparagine 102 to histidine 105, threonine 189, lysine 203, glutamine 315, threonine 331, and lysine 459. Histidine 105 serves as the catalytic Proton donor. Alanine 455–arginine 461 provides a ligand contact to substrate. Residues arginine 461 and glycine 589 to glycine 591 contribute to the GTP site.

It belongs to the adenylosuccinate synthetase family. In terms of assembly, homodimer. Mg(2+) serves as cofactor.

The protein resides in the cytoplasm. The enzyme catalyses IMP + L-aspartate + GTP = N(6)-(1,2-dicarboxyethyl)-AMP + GDP + phosphate + 2 H(+). It participates in purine metabolism; AMP biosynthesis via de novo pathway; AMP from IMP: step 1/2. In terms of biological role, plays an important role in the salvage pathway for purine nucleotide biosynthesis. Catalyzes the first committed step in the biosynthesis of AMP from IMP. In Trypanosoma brucei gambiense (strain MHOM/CI/86/DAL972), this protein is Adenylosuccinate synthetase.